Reading from the N-terminus, the 466-residue chain is Glutamate--tRNA ligase 1 (466 aa).

The 'HIGH' region signature appears at 9–19 (PSPTGYLHIGG). Zn(2+)-binding residues include Cys-98, Cys-100, Cys-125, and Glu-127. Positions 236 to 240 (KLSKR) match the 'KMSKS' region motif. Lys-239 contacts ATP.

It belongs to the class-I aminoacyl-tRNA synthetase family. Glutamate--tRNA ligase type 1 subfamily. In terms of assembly, monomer. Zn(2+) is required as a cofactor.

The protein resides in the cytoplasm. It catalyses the reaction tRNA(Glu) + L-glutamate + ATP = L-glutamyl-tRNA(Glu) + AMP + diphosphate. In terms of biological role, catalyzes the attachment of glutamate to tRNA(Glu) in a two-step reaction: glutamate is first activated by ATP to form Glu-AMP and then transferred to the acceptor end of tRNA(Glu). The sequence is that of Glutamate--tRNA ligase 1 from Acidithiobacillus ferrooxidans (strain ATCC 53993 / BNL-5-31) (Leptospirillum ferrooxidans (ATCC 53993)).